The sequence spans 490 residues: Cheilanthifoline synthase (490 aa).

The helical transmembrane segment at E2 to L22 threads the bilayer. Residue C432 coordinates heme.

It belongs to the cytochrome P450 family. Heme serves as cofactor. In terms of tissue distribution, expressed in roots. Detected in leaves and stems.

The protein resides in the endoplasmic reticulum membrane. The enzyme catalyses (S)-scoulerine + reduced [NADPH--hemoprotein reductase] + O2 = (S)-cheilanthifoline + oxidized [NADPH--hemoprotein reductase] + 2 H2O + H(+). Its pathway is alkaloid biosynthesis. Functionally, methylenedioxy bridge-forming cytochrome P450 involved in the biosynthesis of isoquinoline alkaloids. Converts (S)-scoulerine into (R,S)-cheilanthifoline. Catalyzes an oxidative reaction that does not incorporate oxygen into the product. The polypeptide is Cheilanthifoline synthase (CYP719A5) (Eschscholzia californica (California poppy)).